Reading from the N-terminus, the 36-residue chain is Putative DNA-binding protein inhibitor ID-2B (36 aa).

The polypeptide is Putative DNA-binding protein inhibitor ID-2B (ID2B) (Homo sapiens (Human)).